A 93-amino-acid chain; its full sequence is MFKVNEYFDGTVKSIAFSQVDGQATIGVMAAGEYEFGTAQREIMHVISGELNVKLPDSTDWETFSTGSQFNVPANSKFQLKVSVDTAYLCEYR.

This sequence belongs to the nucleoside phosphorylase PpnP family.

It catalyses the reaction a purine D-ribonucleoside + phosphate = a purine nucleobase + alpha-D-ribose 1-phosphate. The catalysed reaction is adenosine + phosphate = alpha-D-ribose 1-phosphate + adenine. It carries out the reaction cytidine + phosphate = cytosine + alpha-D-ribose 1-phosphate. The enzyme catalyses guanosine + phosphate = alpha-D-ribose 1-phosphate + guanine. It catalyses the reaction inosine + phosphate = alpha-D-ribose 1-phosphate + hypoxanthine. The catalysed reaction is thymidine + phosphate = 2-deoxy-alpha-D-ribose 1-phosphate + thymine. It carries out the reaction uridine + phosphate = alpha-D-ribose 1-phosphate + uracil. The enzyme catalyses xanthosine + phosphate = alpha-D-ribose 1-phosphate + xanthine. In terms of biological role, catalyzes the phosphorolysis of diverse nucleosides, yielding D-ribose 1-phosphate and the respective free bases. Can use uridine, adenosine, guanosine, cytidine, thymidine, inosine and xanthosine as substrates. Also catalyzes the reverse reactions. The polypeptide is Pyrimidine/purine nucleoside phosphorylase (Pseudomonas savastanoi pv. phaseolicola (strain 1448A / Race 6) (Pseudomonas syringae pv. phaseolicola (strain 1448A / Race 6))).